We begin with the raw amino-acid sequence, 483 residues long: Phloretin 2'-O-glucosyltransferase (483 aa).

His-15 (proton acceptor) is an active-site residue. His-15 lines the an anthocyanidin pocket. Asp-118 acts as the Charge relay in catalysis. Thr-140, Ala-360, Gln-362, His-377, Trp-380, Asn-381, Ser-382, and Glu-385 together coordinate UDP-alpha-D-glucose. Ala-400 contributes to the an anthocyanidin binding site. 2 residues coordinate UDP-alpha-D-glucose: Glu-401 and Gln-402.

It belongs to the UDP-glycosyltransferase family. Highly expressed in roots and at lower levels in leaves, flowers and fruits.

The catalysed reaction is phloretin + UDP-alpha-D-glucose = phlorizin + UDP + H(+). In terms of biological role, glycosyltransferase that possesses phloretin 2'-O-glycosyltransferase activity. Converts phloretin to phlorizin (phloretin 2'-O-glucoside), a potent antioxidant. Is specific for phloretin and does not possess glycosyltransferase activity toward caffeic acid, catechin, chlorogenic acid, 2-coumaric acid, 3-coumaric acid, 4-coumaric acid, cyanidin, 3,4-dihydroxyhydrocinnamic acid, epicatechin, 3-hydroxybenzoic acid, naringenin, 3,4-dihydroxybenzoic acid, quercetin and rutin. Can glycosylate phloretin in the presence of UDP-glucose, UDP-xylose and UDP-galactose. This is Phloretin 2'-O-glucosyltransferase from Malus domestica (Apple).